A 127-amino-acid polypeptide reads, in one-letter code: Cytochrome c' (127 aa).

Glutamine 1 carries the post-translational modification Pyrrolidone carboxylic acid. Positions 12, 13, 67, 116, 119, and 120 each coordinate heme c.

Homodimer. Post-translationally, binds 1 heme c group covalently per subunit.

It localises to the periplasm. Cytochrome c' is the most widely occurring bacterial c-type cytochrome. Cytochromes c' are high-spin proteins and the heme has no sixth ligand. Their exact function is not known. In Alcaligenes xylosoxydans xylosoxydans (Achromobacter xylosoxidans), this protein is Cytochrome c'.